Reading from the N-terminus, the 187-residue chain is Peptidyl-tRNA hydrolase (187 aa).

Y14 is a tRNA binding site. H19 functions as the Proton acceptor in the catalytic mechanism. Residues Y64, N66, and N112 each coordinate tRNA.

The protein belongs to the PTH family. In terms of assembly, monomer.

It is found in the cytoplasm. It carries out the reaction an N-acyl-L-alpha-aminoacyl-tRNA + H2O = an N-acyl-L-amino acid + a tRNA + H(+). In terms of biological role, hydrolyzes ribosome-free peptidyl-tRNAs (with 1 or more amino acids incorporated), which drop off the ribosome during protein synthesis, or as a result of ribosome stalling. Functionally, catalyzes the release of premature peptidyl moieties from peptidyl-tRNA molecules trapped in stalled 50S ribosomal subunits, and thus maintains levels of free tRNAs and 50S ribosomes. This Clostridium acetobutylicum (strain ATCC 824 / DSM 792 / JCM 1419 / IAM 19013 / LMG 5710 / NBRC 13948 / NRRL B-527 / VKM B-1787 / 2291 / W) protein is Peptidyl-tRNA hydrolase.